The following is a 475-amino-acid chain: Arginine biosynthesis bifunctional protein ArgJ 1, mitochondrial (475 aa).

Residues Thr204, Lys233, Thr244, Glu331, Asn470, and Thr475 each coordinate substrate. The active-site Nucleophile is the Thr244.

Belongs to the ArgJ family. As to quaternary structure, heterodimer of an alpha and a beta chain. In terms of processing, the alpha and beta chains are autoproteolytically processed from a single precursor protein within the mitochondrion.

It localises to the mitochondrion matrix. The enzyme catalyses N(2)-acetyl-L-ornithine + L-glutamate = N-acetyl-L-glutamate + L-ornithine. The catalysed reaction is L-glutamate + acetyl-CoA = N-acetyl-L-glutamate + CoA + H(+). It participates in amino-acid biosynthesis; L-arginine biosynthesis; L-ornithine and N-acetyl-L-glutamate from L-glutamate and N(2)-acetyl-L-ornithine (cyclic): step 1/1. It functions in the pathway amino-acid biosynthesis; L-arginine biosynthesis; N(2)-acetyl-L-ornithine from L-glutamate: step 1/4. Functionally, catalyzes two activities which are involved in the cyclic version of arginine biosynthesis: the synthesis of acetylglutamate from glutamate and acetyl-CoA, and of ornithine by transacetylation between acetylornithine and glutamate. This is Arginine biosynthesis bifunctional protein ArgJ 1, mitochondrial from Botryotinia fuckeliana (strain B05.10) (Noble rot fungus).